A 557-amino-acid polypeptide reads, in one-letter code: Polypyrimidine tract-binding protein 1 (557 aa).

At methionine 1 the chain carries N-acetylmethionine. Residue serine 16 is modified to Phosphoserine. 3 consecutive RRM domains span residues 59–143 (RVIH…SSPN), 184–260 (LRII…FSKL), and 363–437 (SVLL…LSKH). Lysine 65 participates in a covalent cross-link: Glycyl lysine isopeptide (Lys-Gly) (interchain with G-Cter in SUMO2). Phosphotyrosine is present on tyrosine 127. Threonine 138 is subject to Phosphothreonine. At serine 141 the chain carries Phosphoserine. A Glycyl lysine isopeptide (Lys-Gly) (interchain with G-Cter in SUMO2) cross-link involves residue lysine 218. Phosphoserine is present on serine 459. Positions 480–555 (ATLHLSNIPP…HHLRVSFSKS (76 aa)) constitute an RRM 4 domain.

As to quaternary structure, monomer. Part of a ternary complex containing KHSRP, PTBP1, PTBP2 and HNRPH1. Interacts with RAVER1 and SFPQ. Interacts with IVNS1ABP (via BACK domain); the interaction is direct.

Its subcellular location is the nucleus. In terms of biological role, plays a role in pre-mRNA splicing and in the regulation of alternative splicing events. Activates exon skipping of its own pre-mRNA during muscle cell differentiation. Binds to the polypyrimidine tract of introns. May promote RNA looping when bound to two separate polypyrimidine tracts in the same pre-mRNA. May promote the binding of U2 snRNP to pre-mRNA. Cooperates with RAVER1 to modulate switching between mutually exclusive exons during maturation of the TPM1 pre-mRNA. Represses the splicing of MAPT/Tau exon 10. Binds to polypyrimidine-rich controlling element (PCE) of CFTR and promotes exon skipping of CFTR exon 9, thereby antagonizing TIA1 and its role in exon inclusion of CFTR exon 9. Plays a role in the splicing of pyruvate kinase PKM by binding repressively to a polypyrimidine tract flanking PKM exon 9, inhibiting exon 9 inclusion and resulting in exon 10 inclusion and production of the PKM M2 isoform. In case of infection by picornaviruses, binds to the viral internal ribosome entry site (IRES) and stimulates the IRES-mediated translation. The protein is Polypyrimidine tract-binding protein 1 (PTBP1) of Homo sapiens (Human).